The primary structure comprises 383 residues: Na(+)/H(+) antiporter NhaA (383 aa).

A run of 11 helical transmembrane segments spans residues 21–41 (AAGVMLMAASAIGMVFANSIW), 56–76 (LTMRGWINDALMALFFLLAGL), 94–114 (LLPGVAAIGGMVVPAIIYVAF), 123–143 (GWAIPTATDIAFALGVLALAG), 152–172 (VFLTALAIVDDLGAVIVIALF), 175–195 (GTLSVLPGAGVAAILGLLLML), 202–222 (TLFPYLLAGVPLWWLTLKSGI), 258–278 (FVILPLFGFANAGISLHGVTV), 287–307 (LGVGAALMLGKPLGVLGAVSI), 326–346 (IGIAFLCGIGFTMSLFIAILA), and 355–375 (QIKLGILSGSMLSGLCGYILL).

It belongs to the NhaA Na(+)/H(+) (TC 2.A.33) antiporter family.

It is found in the cell inner membrane. It carries out the reaction Na(+)(in) + 2 H(+)(out) = Na(+)(out) + 2 H(+)(in). Functionally, na(+)/H(+) antiporter that extrudes sodium in exchange for external protons. In Granulibacter bethesdensis (strain ATCC BAA-1260 / CGDNIH1), this protein is Na(+)/H(+) antiporter NhaA.